A 476-amino-acid chain; its full sequence is Glutamate--tRNA ligase (476 aa).

Residues 8-18 carry the 'HIGH' region motif; that stretch reads PSPTGTLHIGT. Residues 247–251 carry the 'KMSKS' region motif; that stretch reads KLSKR. Lysine 250 is a binding site for ATP.

Belongs to the class-I aminoacyl-tRNA synthetase family. Glutamate--tRNA ligase type 1 subfamily. Monomer.

The protein localises to the cytoplasm. It catalyses the reaction tRNA(Glu) + L-glutamate + ATP = L-glutamyl-tRNA(Glu) + AMP + diphosphate. Its function is as follows. Catalyzes the attachment of glutamate to tRNA(Glu) in a two-step reaction: glutamate is first activated by ATP to form Glu-AMP and then transferred to the acceptor end of tRNA(Glu). In Synechococcus sp. (strain WH7803), this protein is Glutamate--tRNA ligase.